The chain runs to 518 residues: Protein FAM98A (518 aa).

2 disordered regions span residues 297 to 415 (VLMG…GHSS) and 434 to 518 (GSGY…HYTS). Residues 302 to 311 (VPDRGGRPNE) are compositionally biased toward basic and acidic residues. Gly residues-rich tracts occupy residues 349–364 (GGRG…GGRG), 383–396 (WTDG…GYQD), and 405–415 (QPGGYHGGHSS). The segment covering 447–459 (RYQDGGHHGDRGG) has biased composition (basic and acidic residues). Residues 460 to 484 (GRGGRGGRGGRGGRAGQGGGWGGRG) show a composition bias toward gly residues. Over residues 488–504 (YHQGGQFEQHFQHGGYQ) the composition is skewed to low complexity. Residues 505–518 (YNHSGFGQGRHYTS) are compositionally biased toward polar residues.

It belongs to the FAM98 family. Interacts (via N- and C-terminus) with DDX1. Interacts (via N- and C-terminus) with C14orf166. Interacts with FAM98B. Interacts with PLEKHM1 (via N- and C-terminus). Expressed strongly in colorectal cancer cells. Expressed strongly in colorectal cancer tissues compared to wild-type colon samples (at protein level). Expressed strongly in colorectal cancer tissues compared to wild-type colon samples.

Positively stimulates PRMT1-induced protein arginine methylation. Involved in skeletal homeostasis. Positively regulates lysosome peripheral distribution and ruffled border formation in osteoclasts. The chain is Protein FAM98A from Homo sapiens (Human).